The chain runs to 263 residues: HTH-type transcriptional repressor NanR (263 aa).

Residues 1–25 (MDVMNAFDSQAEDSPTSLGRSLRRR) are disordered. Positions 30–98 (KKLSEMVEEE…NGERARVSRP (69 aa)) constitute an HTH gntR-type domain. A DNA-binding region (H-T-H motif) is located at residues 58-77 (ERELMAFFNVGRPSVREALA).

The protein belongs to the NanR family.

In terms of biological role, transcriptional repressor that controls expression of the genes required for the catabolism of sialic acids. This chain is HTH-type transcriptional repressor NanR, found in Salmonella choleraesuis (strain SC-B67).